Consider the following 432-residue polypeptide: Adenylosuccinate synthetase (432 aa).

Residues 13 to 19 and 41 to 43 contribute to the GTP site; these read GDEGKGK and GHT. Aspartate 14 functions as the Proton acceptor in the catalytic mechanism. Residues aspartate 14 and glycine 41 each contribute to the Mg(2+) site. Residues 14–17, 39–42, threonine 130, arginine 144, glutamine 225, threonine 240, and arginine 304 contribute to the IMP site; these read DEGK and NAGH. Histidine 42 (proton donor) is an active-site residue. 300–306 is a substrate binding site; it reads ATTGRRR. Residues arginine 306, 332–334, and 415–417 contribute to the GTP site; these read KLD and STG.

This sequence belongs to the adenylosuccinate synthetase family. As to quaternary structure, homodimer. The cofactor is Mg(2+).

The protein resides in the cytoplasm. The catalysed reaction is IMP + L-aspartate + GTP = N(6)-(1,2-dicarboxyethyl)-AMP + GDP + phosphate + 2 H(+). The protein operates within purine metabolism; AMP biosynthesis via de novo pathway; AMP from IMP: step 1/2. Plays an important role in the de novo pathway of purine nucleotide biosynthesis. Catalyzes the first committed step in the biosynthesis of AMP from IMP. In Erwinia tasmaniensis (strain DSM 17950 / CFBP 7177 / CIP 109463 / NCPPB 4357 / Et1/99), this protein is Adenylosuccinate synthetase.